We begin with the raw amino-acid sequence, 430 residues long: Serine--tRNA ligase (430 aa).

237–239 (TAE) contributes to the L-serine binding site. 268-270 (RSE) contacts ATP. An L-serine-binding site is contributed by glutamate 291. ATP is bound at residue 355 to 358 (EISS). Residue serine 391 coordinates L-serine.

Belongs to the class-II aminoacyl-tRNA synthetase family. Type-1 seryl-tRNA synthetase subfamily. As to quaternary structure, homodimer. The tRNA molecule binds across the dimer.

It localises to the cytoplasm. The enzyme catalyses tRNA(Ser) + L-serine + ATP = L-seryl-tRNA(Ser) + AMP + diphosphate + H(+). The catalysed reaction is tRNA(Sec) + L-serine + ATP = L-seryl-tRNA(Sec) + AMP + diphosphate + H(+). It participates in aminoacyl-tRNA biosynthesis; selenocysteinyl-tRNA(Sec) biosynthesis; L-seryl-tRNA(Sec) from L-serine and tRNA(Sec): step 1/1. Its function is as follows. Catalyzes the attachment of serine to tRNA(Ser). Is also able to aminoacylate tRNA(Sec) with serine, to form the misacylated tRNA L-seryl-tRNA(Sec), which will be further converted into selenocysteinyl-tRNA(Sec). The sequence is that of Serine--tRNA ligase from Yersinia pseudotuberculosis serotype O:1b (strain IP 31758).